The following is a 352-amino-acid chain: MSQQTPLAYAVAQWLQQSSTSVPADQKAKLQQAAKSVSEAFGVDTSSAEQQAQYGSGPGLQAIFDIFLKTQAKMGAAPAPAAASSSSTAPAAAAATPSDEDLAKAEQLKAEGNKAMSAKDYGAAIEAYGKAIELNPNSPVYFSNRAAAFSQIGQHDSAIDDAKQASKIDPKFGKAYSRLGHALFSSGRYQEAVEAYQKGVEVDPSNEVLKKGLAASKEQLSSSSSSNANDATASRGAADAVSAPSAGADAGAGAGGFPNFGGGAGGMPDLAAMMNNPMIAQMAQNLMSNPDSLASLMNNPMLRQAAERFGSGGGMPDMSSMMNDPALRDMARNFMGGAGRGAGGNGGNNMYG.

Over residues 80–97 the composition is skewed to low complexity; sequence PAAASSSSTAPAAAAATP. Residues 80–103 are disordered; that stretch reads PAAASSSSTAPAAAAATPSDEDLA. TPR repeat units follow at residues 105–138, 140–172, and 173–206; these read AEQLKAEGNKAMSAKDYGAAIEAYGKAIELNPNS, VYFSNRAAAFSQIGQHDSAIDDAKQASKIDPKF, and GKAYSRLGHALFSSGRYQEAVEAYQKGVEVDPSN. Positions 217 to 236 are disordered; sequence KEQLSSSSSSNANDATASRG.

This sequence belongs to the SGT family.

Functionally, co-chaperone that binds to the molecular chaperone Hsp70 and regulates Hsp70 ATPase activity. In Mycosarcoma maydis (Corn smut fungus), this protein is Small glutamine-rich tetratricopeptide repeat-containing protein 2.